Consider the following 199-residue polypeptide: Superoxide dismutase [Fe] (199 aa).

4 residues coordinate Fe cation: His28, His80, Asp162, and His166.

The protein belongs to the iron/manganese superoxide dismutase family. As to quaternary structure, homodimer. Fe cation serves as cofactor.

Its subcellular location is the cytoplasm. It catalyses the reaction 2 superoxide + 2 H(+) = H2O2 + O2. In terms of biological role, destroys superoxide anion radicals which are normally produced within the cells and which are toxic to biological systems. In Leptolyngbya boryana (Plectonema boryanum), this protein is Superoxide dismutase [Fe] (sodB).